The sequence spans 423 residues: METEQAPRPAEPPGDLTTAITAPGEQLLTLLDRHLPRIRAQAAPNDRDSTFPAATFHGFARDGVLGATVPAELGGMGVSRLHDVAVALLRVAEADASTALALHAQFSRGITLTYEWLHGPPPTRKLAERLLRAMARGEAVIGGAVKDHGRETTRLRPDGSGGWLLSGRKTLVTMAPIATHFVVSAQAPAAGGTTLLYAPIVARDTPGLSIVDGWTGLGMRASGTLDVAFDDCPVPAGNLLARGSVGAHSDAALAGQAVSSVAMLGIYVGVAQAARDLAVETMARRSATPPAASRTLVAETEARLYALRATASAALVNVDELSPRHDMDPDERGRRMMTPFQCAKVMVNQLAAAVVDDCLTVVGGATYAAEHPLARLSRDVRAGRFMQPYTYADGVDYLSAQALGLERDNNYVSLRATRPVDSR.

It belongs to the acyl-CoA dehydrogenase family. Requires FAD as cofactor.

Its pathway is antibiotic biosynthesis. In terms of biological role, nitrososynthase involved in the biosynthesis of rubradirin, an ansamycin antibiotic. In vitro, catalyzes the double-oxidation of TDP-L-epi-vancosamine to TDP-L-epi-vancosonitrose. In vivo, probably catalyzes the formation of D-rubranitrose, the nitro sugar moiety of rubradirin. This chain is Amino sugar nitrososynthase RubN8, found in Streptomyces rubradiris (Streptomyces achromogenes subsp. rubradiris).